Here is a 214-residue protein sequence, read N- to C-terminus: Pyrrolidone-carboxylate peptidase (214 aa).

Active-site residues include Glu-79, Cys-142, and His-166.

It belongs to the peptidase C15 family. Homotetramer.

The protein resides in the cytoplasm. The enzyme catalyses Release of an N-terminal pyroglutamyl group from a polypeptide, the second amino acid generally not being Pro.. Its function is as follows. Removes 5-oxoproline from various penultimate amino acid residues except L-proline. The polypeptide is Pyrrolidone-carboxylate peptidase (Fusobacterium nucleatum subsp. nucleatum (strain ATCC 25586 / DSM 15643 / BCRC 10681 / CIP 101130 / JCM 8532 / KCTC 2640 / LMG 13131 / VPI 4355)).